The sequence spans 278 residues: Potassium/proton antiporter CemA (278 aa).

Helical transmembrane passes span 61-81, 154-174, 203-223, and 238-258; these read VVFLFIIPVLINQVSKSFLFG, CAITNILADLLSIAIFISILI, IILFTDMFVGFHSPHGWEVII, and FIFVFISTFPVILDTIFKYWI.

Belongs to the CemA family.

The protein localises to the plastid. Its subcellular location is the chloroplast inner membrane. The catalysed reaction is K(+)(in) + H(+)(out) = K(+)(out) + H(+)(in). Functionally, contributes to K(+)/H(+) antiport activity by supporting proton efflux to control proton extrusion and homeostasis in chloroplasts in a light-dependent manner to modulate photosynthesis. Prevents excessive induction of non-photochemical quenching (NPQ) under continuous-light conditions. Indirectly promotes efficient inorganic carbon uptake into chloroplasts. The sequence is that of Potassium/proton antiporter CemA from Gracilaria tenuistipitata var. liui (Red alga).